Consider the following 100-residue polypeptide: NADH-quinone oxidoreductase subunit K (100 aa).

3 helical membrane passes run 2-22 (IGLTHYLILASLVFVIGLVGI), 29-49 (IMLFFSSEILLNSANIALAAI), and 60-80 (IIAFFIVAIAASEVAVGLGLL).

Belongs to the complex I subunit 4L family. As to quaternary structure, NDH-1 is composed of 14 different subunits. Subunits NuoA, H, J, K, L, M, N constitute the membrane sector of the complex.

The protein resides in the cell inner membrane. The catalysed reaction is a quinone + NADH + 5 H(+)(in) = a quinol + NAD(+) + 4 H(+)(out). NDH-1 shuttles electrons from NADH, via FMN and iron-sulfur (Fe-S) centers, to quinones in the respiratory chain. The immediate electron acceptor for the enzyme in this species is believed to be ubiquinone. Couples the redox reaction to proton translocation (for every two electrons transferred, four hydrogen ions are translocated across the cytoplasmic membrane), and thus conserves the redox energy in a proton gradient. In Campylobacter concisus (strain 13826), this protein is NADH-quinone oxidoreductase subunit K.